The sequence spans 310 residues: Transaldolase (310 aa).

The Schiff-base intermediate with substrate role is filled by K124.

It belongs to the transaldolase family. Type 1 subfamily. Homodimer.

The protein localises to the cytoplasm. It catalyses the reaction D-sedoheptulose 7-phosphate + D-glyceraldehyde 3-phosphate = D-erythrose 4-phosphate + beta-D-fructose 6-phosphate. It participates in carbohydrate degradation; pentose phosphate pathway; D-glyceraldehyde 3-phosphate and beta-D-fructose 6-phosphate from D-ribose 5-phosphate and D-xylulose 5-phosphate (non-oxidative stage): step 2/3. Its function is as follows. Transaldolase is important for the balance of metabolites in the pentose-phosphate pathway. The chain is Transaldolase from Teredinibacter turnerae (strain ATCC 39867 / T7901).